We begin with the raw amino-acid sequence, 246 residues long: Probable aquaporin AqpM (246 aa).

The Cytoplasmic portion of the chain corresponds to 1–12 (MTMTLAKRFTAE). A helical membrane pass occupies residues 13–33 (VVGTFILVFFGPGAAVITLMI). Residues 34 to 56 (ANGADKPNEFNIGIGALGGLGDW) lie on the Extracellular side of the membrane. A helical membrane pass occupies residues 57–77 (FAIGMAFALAIAAVIYSLGRI). Over 78–104 (SGAHINPAVTIALWSIGRFPGREVVPY) the chain is Cytoplasmic. The short motif at 83–85 (NPA) is the NPA 1 element. The helical transmembrane segment at 105-125 (IVAQFIGAALGSLLFLACVGP) threads the bilayer. The Extracellular portion of the chain corresponds to 126 to 146 (AAATVGGLGATAPFPGIGYGQ). Residues 147–167 (AILTEAIGTFLLMLVIMGVAV) traverse the membrane as a helical segment. Residues 168-173 (DERAPP) are Cytoplasmic-facing. Residues 174 to 194 (GFAGLVIGLTVGGIITTIGNI) form a helical membrane-spanning segment. At 195–217 (TGSSLNPARTFGPYLGDSLMGIN) the chain is on the extracellular side. Positions 200 to 202 (NPA) match the NPA 2 motif. A helical membrane pass occupies residues 218 to 238 (LWQYFPIYVIGPIVGAVAAAW). Topologically, residues 239–246 (LYNYLAKE) are cytoplasmic.

The protein belongs to the MIP/aquaporin (TC 1.A.8) family.

It localises to the cell membrane. Functionally, channel that permits osmotically driven movement of water in both directions. The protein is Probable aquaporin AqpM (aqpM) of Archaeoglobus fulgidus (strain ATCC 49558 / DSM 4304 / JCM 9628 / NBRC 100126 / VC-16).